We begin with the raw amino-acid sequence, 1104 residues long: Reverse gyrase (1104 aa).

Residues 1-39 (MAVNSKYHHSCINCGGLNTDERNERGLPCEVCLPEDSPS) form an RG N-terminal-type zinc finger. Zn(2+) contacts are provided by Cys-11, Cys-14, Cys-29, and Cys-32. 8 residues coordinate ADP: Phe-75, Asp-78, Gln-83, Gly-103, Gly-105, Lys-106, Thr-107, and Thr-108. ATP contacts are provided by residues Gln-83 and 100–107 (APTGVGKT). Positions 87–242 (AKRIVQGKSF…FSTIKQGKIY (156 aa)) constitute a Helicase ATP-binding domain. The DEAD box signature appears at 203-206 (DDVD). An insert region region spans residues 223-250 (GIPEEIIRKAFSTIKQGKIYERPKNLKP). The 223-residue stretch at 300–522 (KLVELLEIFR…EAEANWKELV (223 aa)) folds into the Helicase C-terminal domain. The latch region stretch occupies residues 390 to 460 (RFSLELDKAP…KDEDLELIIP (71 aa)). Residues 538–1104 (DTSRSLLIIV…EEIKSLMEEG (567 aa)) are topoisomerase I. The region spanning 542–699 (SLLIIVESPT…SLRRIEMHEI (158 aa)) is the Toprim domain. Glu-548 contributes to the Mg(2+) binding site. The RG C-terminal-type zinc finger occupies 618–645 (LKRCRDCGYQFTEDRDECPVCSSKNIDD). The Zn(2+) site is built by Cys-621, Cys-624, Cys-635, and Cys-638. Asp-668 is a Mg(2+) binding site. A Topo IA-type catalytic domain is found at 715–1101 (DFNLVKAQIV…LLYEEIKSLM (387 aa)). The O-(5'-phospho-DNA)-tyrosine intermediate role is filled by Tyr-851.

This sequence in the N-terminal section; belongs to the DEAD box helicase family. DDVD subfamily. The protein in the C-terminal section; belongs to the type IA topoisomerase family. As to quaternary structure, monomer. Requires Zn(2+) as cofactor. Mg(2+) serves as cofactor.

It is found in the cytoplasm. The enzyme catalyses ATP + H2O = ADP + phosphate + H(+). In terms of biological role, modifies the topological state of DNA by introducing positive supercoils in an ATP-dependent process. Increases the linking number in steps of +1. Probably recognizes regions with a low GC content which melt and form a ssDNA bubble, allowing the enzyme to bind and cleave the DNA prior to strand passage; the bubble is probably cleaved by 2 reverse gyrase molecules, one on each strand. Positively supercoils DNA with all NTPS, although it strongly prefers ATP. In the presence of non-hydrolyzable ATP analogs it partially relaxes negative supercoils. Has an intrinsic ATPase activity that is stimulated by DNA; ssDNA is most effective. Binds to single-stranded DNA, transiently cleaves and then rejoins the ends, introducing a positive supercoil in the process. The scissile phosphodiester is attacked by the catalytic tyrosine of the enzyme, resulting in the formation of a DNA-(5'-phosphotyrosyl)-enzyme intermediate. The helicase-like domain is a nucleotide-dependent switch that alternates between a physically closed ATP-bound state with a slight preference for dsDNA, and an open ADP-bound state with a high preference for ssDNA. Whole enzyme has a very poor (k-unwind=0.001 sec(-1)) non-processive helicase activity in the 3'-5' direction that works on short substrates, while the isolated helicase domain has a slightly better helicase activity that works in both directions. Probably involved in rewinding DNA strands in regions of the chromosome that have opened up to allow replication, transcription, DNA repair and/or for DNA protection. The sequence is that of Reverse gyrase from Thermotoga maritima (strain ATCC 43589 / DSM 3109 / JCM 10099 / NBRC 100826 / MSB8).